The sequence spans 368 residues: tRNA/tmRNA (uracil-C(5))-methyltransferase (368 aa).

The S-adenosyl-L-methionine site is built by Q192, Y220, N225, E241, and D301. C326 (nucleophile) is an active-site residue. The active-site Proton acceptor is the E360.

Belongs to the class I-like SAM-binding methyltransferase superfamily. RNA M5U methyltransferase family. TrmA subfamily.

It catalyses the reaction uridine(54) in tRNA + S-adenosyl-L-methionine = 5-methyluridine(54) in tRNA + S-adenosyl-L-homocysteine + H(+). The catalysed reaction is uridine(341) in tmRNA + S-adenosyl-L-methionine = 5-methyluridine(341) in tmRNA + S-adenosyl-L-homocysteine + H(+). Dual-specificity methyltransferase that catalyzes the formation of 5-methyluridine at position 54 (m5U54) in all tRNAs, and that of position 341 (m5U341) in tmRNA (transfer-mRNA). The polypeptide is tRNA/tmRNA (uracil-C(5))-methyltransferase (Actinobacillus pleuropneumoniae serotype 5b (strain L20)).